Here is a 347-residue protein sequence, read N- to C-terminus: Probable cytosolic iron-sulfur protein assembly protein 1 (347 aa).

7 WD repeats span residues 11–48, 62–101, 122–161, 168–207, 212–255, 266–304, and 311–347; these read LHNEKIWDIDCYKGLLATASTDRRIKIVNIGDIGDGLV, SHKKTVRSVAWRPHSTILAAGSFDSTVSIWAKDENDGDAD, GHENEVKSVAWSKDGYFLATCSRDKSVWIWESDEMGEEYE, EHSQDVKHVVWHPFKDILASSSYDDTIRIWKEYDDDWEAA, GHEG…SIEE, VHGKPVYSVSWSEDGLIASAGSDGMLVIYKENKDNVWEV, and SHSIYEINVVKWIKLNNGKSYLATAGDDGYVNIWAYN.

Belongs to the WD repeat CIA1 family. As to quaternary structure, interacts with NAR1.

It is found in the cytoplasm. It localises to the nucleus. Functionally, essential component of the cytosolic iron-sulfur (Fe/S) protein assembly machinery. Required for the maturation of extramitochondrial Fe/S proteins. This chain is Probable cytosolic iron-sulfur protein assembly protein 1, found in Vanderwaltozyma polyspora (strain ATCC 22028 / DSM 70294 / BCRC 21397 / CBS 2163 / NBRC 10782 / NRRL Y-8283 / UCD 57-17) (Kluyveromyces polysporus).